Here is a 341-residue protein sequence, read N- to C-terminus: Anthranilate phosphoribosyltransferase (341 aa).

5-phospho-alpha-D-ribose 1-diphosphate is bound by residues G79, 82-83 (GD), T87, 89-92 (NIST), 107-115 (KHGNRAASS), and A119. G79 provides a ligand contact to anthranilate. S91 serves as a coordination point for Mg(2+). N110 is an anthranilate binding site. R165 contributes to the anthranilate binding site. Mg(2+) contacts are provided by D224 and E225.

This sequence belongs to the anthranilate phosphoribosyltransferase family. In terms of assembly, homodimer. The cofactor is Mg(2+).

The catalysed reaction is N-(5-phospho-beta-D-ribosyl)anthranilate + diphosphate = 5-phospho-alpha-D-ribose 1-diphosphate + anthranilate. It participates in amino-acid biosynthesis; L-tryptophan biosynthesis; L-tryptophan from chorismate: step 2/5. Catalyzes the transfer of the phosphoribosyl group of 5-phosphorylribose-1-pyrophosphate (PRPP) to anthranilate to yield N-(5'-phosphoribosyl)-anthranilate (PRA). This Lacticaseibacillus paracasei (strain ATCC 334 / BCRC 17002 / CCUG 31169 / CIP 107868 / KCTC 3260 / NRRL B-441) (Lactobacillus paracasei) protein is Anthranilate phosphoribosyltransferase.